The following is a 283-amino-acid chain: Cyclin-C (283 aa).

Residues 46–144 (NVIQALGEHL…ILECEFYLLE (99 aa)) form the Cyclin N-terminal domain. Positions 252 to 283 (TILNKMPKPKPPPNSEGEQGTNGSQSSGYSQS) are disordered. The segment covering 267 to 283 (EGEQGTNGSQSSGYSQS) has biased composition (polar residues).

The protein belongs to the cyclin family. Cyclin C subfamily. As to quaternary structure, component of the Mediator complex. The cylin/CDK pair formed by ccnc/cdk8 also associates with the large subunit of RNA polymerase II.

It localises to the nucleus. Its function is as follows. Component of the Mediator complex, a coactivator involved in regulated gene transcription of nearly all RNA polymerase II-dependent genes. Mediator functions as a bridge to convey information from gene-specific regulatory proteins to the basal RNA polymerase II transcription machinery. Mediator is recruited to promoters by direct interactions with regulatory proteins and serves as a scaffold for the assembly of a functional preinitiation complex with RNA polymerase II and the general transcription factors. Binds to and activates cyclin-dependent kinase cdk8 that phosphorylates the CTD (C-terminal domain) of the large subunit of RNA polymerase II (RNAp II), which may inhibit the formation of a transcription initiation complex. This Xenopus tropicalis (Western clawed frog) protein is Cyclin-C (ccnc).